A 268-amino-acid polypeptide reads, in one-letter code: Protein CONTINUOUS VASCULAR RING 1 (268 aa).

The Cytoplasmic portion of the chain corresponds to 1 to 70 (MGDEKPVIVM…GWASKKFMTG (70 aa)). Positions 21-48 (IPVADSGDKDDGSSSKPSSSSSASSSSH) are disordered. The span at 34-48 (SSKPSSSSSASSSSH) shows a compositional bias: low complexity. A helical membrane pass occupies residues 71 to 91 (CVILLPIAITFYITWWFIHFV). At 92-103 (DGFFSPIYAQLG) the chain is on the extracellular side. A helical membrane pass occupies residues 104–124 (INVFGFGFLTSIAFIFLVGVF). Over 125–268 (MSSWLGASVL…LASIDRATSL (144 aa)) the chain is Cytoplasmic.

The protein belongs to the plant COV1 protein family. In terms of tissue distribution, mostly expressed in flowers and stems, and, to a lower extent, in roots and leaves.

It is found in the membrane. Functionally, involved in the regulation of vascular patterning in the stem, probably by negatively regulating the differentiation of vascular tissue. This Arabidopsis thaliana (Mouse-ear cress) protein is Protein CONTINUOUS VASCULAR RING 1.